A 1025-amino-acid polypeptide reads, in one-letter code: Multidrug resistance protein MdtC (1025 aa).

The next 12 membrane-spanning stretches (helical) occupy residues 15 to 35 (ILIS…LPVA), 333 to 353 (EVEQ…FLFL), 360 to 380 (LIPA…MYLC), 387 to 407 (LSLM…IVVL), 431 to 451 (VGFT…PLLL), 469 to 489 (VAIG…CGWL), 528 to 548 (LTGL…ISIP), 851 to 871 (AQVI…GVLY), 875 to 895 (VHPL…LLAL), 897 to 917 (IFDA…IGIV), 953 to 973 (PIMM…LSGG), and 984 to 1004 (ITIV…TPVV).

The protein belongs to the resistance-nodulation-cell division (RND) (TC 2.A.6) family. MdtC subfamily. Part of a tripartite efflux system composed of MdtA, MdtB and MdtC. MdtC forms a heteromultimer with MdtB.

The protein localises to the cell inner membrane. The polypeptide is Multidrug resistance protein MdtC (Klebsiella pneumoniae subsp. pneumoniae (strain ATCC 700721 / MGH 78578)).